The chain runs to 475 residues: Trigger factor (475 aa).

One can recognise a PPIase FKBP-type domain in the interval 165–250; sequence GDRVTIDYLG…VKAVFRPDEL (86 aa). Residues 439–466 show a composition bias toward basic and acidic residues; it reads EYDETDVPEEKPAKKKSAVKEKSAEKTS. The segment at 439–475 is disordered; that stretch reads EYDETDVPEEKPAKKKSAVKEKSAEKTSAKKKAPKKA.

It belongs to the FKBP-type PPIase family. Tig subfamily.

It localises to the cytoplasm. The catalysed reaction is [protein]-peptidylproline (omega=180) = [protein]-peptidylproline (omega=0). In terms of biological role, involved in protein export. Acts as a chaperone by maintaining the newly synthesized protein in an open conformation. Functions as a peptidyl-prolyl cis-trans isomerase. The chain is Trigger factor from Bartonella tribocorum (strain CIP 105476 / IBS 506).